A 374-amino-acid chain; its full sequence is Chaperone protein DnaJ (374 aa).

Residues 5–70 form the J domain; the sequence is DFYEILGLGK…QKRDAYDRYG (66 aa). Positions 28–47 are disordered; the sequence is LAMKHHPDRNPDSKGAEDKF. Residues 35-47 are compositionally biased toward basic and acidic residues; it reads DRNPDSKGAEDKF. The CR-type zinc finger occupies 134–212; it reads GYDTTIRVPS…CSGAGKIKRN (79 aa). Residues C147, C150, C164, C167, C186, C189, C200, and C203 each coordinate Zn(2+). 4 CXXCXGXG motif repeats span residues 147 to 154, 164 to 171, 186 to 193, and 200 to 207; these read CETCDGSG, CTTCGGHG, CPKCHGSG, and CTACSGAG.

The protein belongs to the DnaJ family. Homodimer. The cofactor is Zn(2+).

Its subcellular location is the cytoplasm. Functionally, participates actively in the response to hyperosmotic and heat shock by preventing the aggregation of stress-denatured proteins and by disaggregating proteins, also in an autonomous, DnaK-independent fashion. Unfolded proteins bind initially to DnaJ; upon interaction with the DnaJ-bound protein, DnaK hydrolyzes its bound ATP, resulting in the formation of a stable complex. GrpE releases ADP from DnaK; ATP binding to DnaK triggers the release of the substrate protein, thus completing the reaction cycle. Several rounds of ATP-dependent interactions between DnaJ, DnaK and GrpE are required for fully efficient folding. Also involved, together with DnaK and GrpE, in the DNA replication of plasmids through activation of initiation proteins. This Herminiimonas arsenicoxydans protein is Chaperone protein DnaJ.